A 1027-amino-acid chain; its full sequence is Error-prone DNA polymerase (1027 aa).

It belongs to the DNA polymerase type-C family. DnaE2 subfamily.

It is found in the cytoplasm. It carries out the reaction DNA(n) + a 2'-deoxyribonucleoside 5'-triphosphate = DNA(n+1) + diphosphate. Functionally, DNA polymerase involved in damage-induced mutagenesis and translesion synthesis (TLS). It is not the major replicative DNA polymerase. The sequence is that of Error-prone DNA polymerase from Dechloromonas aromatica (strain RCB).